The primary structure comprises 103 residues: Enhancer of rudimentary homolog (103 aa).

It belongs to the E(R) family. As to quaternary structure, homodimer.

May have a role in the cell cycle. This chain is Enhancer of rudimentary homolog, found in Aedes aegypti (Yellowfever mosquito).